The sequence spans 601 residues: Multidrug and toxin extrusion protein 2 (601 aa).

The Cytoplasmic segment spans residues 1–62; sequence MNTAFAGFDE…PRGFWDEARA (62 aa). A helical membrane pass occupies residues 63 to 83; that stretch reads LFVLSGPLFLFQVLNFLTYVV. Over 84-95 the chain is Extracellular; that stretch reads GTVFCGHLGKVE. The helical transmembrane segment at 96 to 116 threads the bilayer; that stretch reads LASVTLGVAFVNVCGVSVGAG. Residues 117–145 are Cytoplasmic-facing; that stretch reads LSSACDTLMSQSFGSPNKKHVGVILQRGS. The helical transmembrane segment at 146–166 threads the bilayer; the sequence is LILLLCCLPCWALFLNTQHIL. Over 167–182 the chain is Extracellular; it reads LLFRQDPAVSRLTQDY. A helical transmembrane segment spans residues 183 to 203; that stretch reads AMIFIPGLPAIFLYSLLAKYL. The Cytoplasmic portion of the chain corresponds to 204–212; that stretch reads QNQGIVWPQ. The helical transmembrane segment at 213-233 threads the bilayer; that stretch reads VLSGVVGNCVNGVANYALVSV. Residues 234-241 lie on the Extracellular side of the membrane; that stretch reads LNLGVRGS. The chain crosses the membrane as a helical span at residues 242 to 262; sequence AYANTISQFVQAAFLFLHIVL. Residues 263 to 281 are Cytoplasmic-facing; the sequence is KKLHLETWEGWSSQCLRDW. A helical membrane pass occupies residues 282 to 301; that stretch reads GPFLSLAIPSMLMMCVEWWA. The Extracellular segment spans residues 302 to 320; the sequence is YEIGSFLMGLLGVVDLSGQ. The helical transmembrane segment at 321 to 341 threads the bilayer; the sequence is AIIYEVATVVYMIPMGLGMAV. Residues 342–361 are Cytoplasmic-facing; the sequence is CVRVGTALGAADTLQAKRSA. The chain crosses the membrane as a helical span at residues 362 to 382; that stretch reads VSGLLCTAGTSLVVGTLLGLL. At 383 to 402 the chain is on the extracellular side; it reads NSQLGYIFTSDEEVIALVNQ. The helical transmembrane segment at 403 to 423 threads the bilayer; sequence VLPIYIVFQLVEAVCCVFGGV. Residues 424 to 437 lie on the Cytoplasmic side of the membrane; the sequence is LRGTGKQAFGAIVN. The chain crosses the membrane as a helical span at residues 438-458; it reads AIMYYIVGLPLGIVLTFVVGM. Position 459 (arginine 459) is a topological domain, extracellular. The chain crosses the membrane as a helical span at residues 460 to 480; the sequence is IMGLWLGMLTCIFLAAVTFVV. Topologically, residues 481–577 are cytoplasmic; sequence YAVQLDWKLA…LSVRQLLFRR (97 aa). Residues 578–598 traverse the membrane as a helical segment; that stretch reads GAALAASVAVLMAGLLVRVLT. The Extracellular portion of the chain corresponds to 599–601; it reads TGY.

This sequence belongs to the multi antimicrobial extrusion (MATE) (TC 2.A.66.1) family. As to expression, expressed in renal cortical tissues.

The protein resides in the cell membrane. The protein localises to the apical cell membrane. The catalysed reaction is thiamine(out) + H(+)(in) = thiamine(in) + H(+)(out). The enzyme catalyses estrone 3-sulfate(in) + H(+)(out) = estrone 3-sulfate(out) + H(+)(in). It catalyses the reaction creatinine(in) + H(+)(out) = creatinine(out) + H(+)(in). Its function is as follows. Multidrug efflux pump that functions as a H(+)/organic cation antiporter. Mediates the efflux of cationic compounds, such as the model cations, tetraethylammonium (TEA) and 1-methyl-4-phenylpyridinium (MPP+), the platinum-based drug oxaliplatin or weak bases that are positively charged at physiological pH, cimetidine or the antidiabetic drug metformin. Mediates the efflux of the endogenous compounds creatinine, thiamine and estrone-3-sulfate. Plays a physiological role in the excretion of drugs, toxins and endogenous metabolites through the kidney. The chain is Multidrug and toxin extrusion protein 2 (SLC47A2) from Oryctolagus cuniculus (Rabbit).